We begin with the raw amino-acid sequence, 421 residues long: 3-isopropylmalate dehydratase large subunit (421 aa).

Positions 301, 361, and 364 each coordinate [4Fe-4S] cluster.

It belongs to the aconitase/IPM isomerase family. LeuC type 2 subfamily. In terms of assembly, heterodimer of LeuC and LeuD. [4Fe-4S] cluster serves as cofactor.

It carries out the reaction (2R,3S)-3-isopropylmalate = (2S)-2-isopropylmalate. Its pathway is amino-acid biosynthesis; L-leucine biosynthesis; L-leucine from 3-methyl-2-oxobutanoate: step 2/4. Functionally, catalyzes the isomerization between 2-isopropylmalate and 3-isopropylmalate, via the formation of 2-isopropylmaleate. This chain is 3-isopropylmalate dehydratase large subunit, found in Desulfitobacterium hafniense (strain Y51).